The primary structure comprises 351 residues: C-X-C chemokine receptor type 1 (351 aa).

Over 1 to 44 (MAEAEYFIWTNPEGDFEKEFGNITGMLPTGDYFIPCKRVPITNR) the chain is Extracellular. N-linked (GlcNAc...) asparagine glycosylation occurs at asparagine 22. Residues 45–71 (QALVVFYALVSLLSLLGNSLVMLVILY) traverse the membrane as a helical segment. Over 72–80 (RRRTRSVMD) the chain is Cytoplasmic. Residues 81-101 (VYVLNLAIADLLFSLTLPFLA) form a helical membrane-spanning segment. The Extracellular segment spans residues 102–116 (VSKLKGWIFGTPLCK). Cysteines 115 and 192 form a disulfide. The chain crosses the membrane as a helical span at residues 117-138 (MVSLLKEFNFFSGILLLACISV). Topologically, residues 139–159 (DRYLAIVHATRTLARKRYLVK) are cytoplasmic. Residues 160-179 (FVCVGIWGLSLILSLPFAIF) form a helical membrane-spanning segment. The Extracellular portion of the chain corresponds to 180-204 (RQAYKPFRSGTVCYEVLGEATTDFR). Residues 205 to 225 (MTLRGLSHIFGFLLPLLTMLV) form a helical membrane-spanning segment. The Cytoplasmic segment spans residues 226 to 247 (CYGLTLRMLFKTHMRQKHRAMG). Residues 248-269 (VIFAVVLVFLLCCLPYNLVLLS) traverse the membrane as a helical segment. Residues 270–290 (DTLLGAHLIEDTCERRNDIDQ) are Extracellular-facing. A helical transmembrane segment spans residues 291 to 313 (ALYITEILGFSHSCLNPIIYAFV). Over 314–351 (GQNFRHEFLKILANHGLVRKEVLTHRRVAFHTSLTAIY) the chain is Cytoplasmic.

It belongs to the G-protein coupled receptor 1 family. In terms of assembly, interacts with IL8. Interacts with GNAI2.

The protein localises to the cell membrane. Functionally, receptor to interleukin-8, which is a powerful neutrophils chemotactic factor. Binding of IL-8 to the receptor causes activation of neutrophils. This response is mediated via a G-protein that activates a phosphatidylinositol-calcium second messenger system. The polypeptide is C-X-C chemokine receptor type 1 (Cxcr1) (Mus musculus (Mouse)).